A 260-amino-acid chain; its full sequence is Snake venom serine proteinase 12 (260 aa).

An N-terminal signal peptide occupies residues 1-18 (MVLIRVLANLLILQLSYA). Positions 19-24 (QKSSEL) are excised as a propeptide. A Peptidase S1 domain is found at 25 to 251 (VIGGDECNIN…HLDWIQSIIA (227 aa)). Cystine bridges form between Cys31–Cys163, Cys50–Cys66, Cys98–Cys258, Cys142–Cys212, Cys174–Cys191, and Cys202–Cys227. His65 functions as the Charge relay system in the catalytic mechanism. N-linked (GlcNAc...) asparagine glycosylation is present at Asn103. Asp110 (charge relay system) is an active-site residue. Ser206 (charge relay system) is an active-site residue.

It belongs to the peptidase S1 family. Snake venom subfamily. In terms of assembly, monomer. As to expression, expressed by the venom gland.

The protein localises to the secreted. Functionally, snake venom serine protease that may act in the hemostasis system of the prey. The protein is Snake venom serine proteinase 12 of Crotalus adamanteus (Eastern diamondback rattlesnake).